Reading from the N-terminus, the 191-residue chain is Surfactant protein C (191 aa).

A propeptide spanning residues 1-23 (MDVGSKEVLMESPPDYSAAPRGR) is cleaved from the precursor. 2 S-palmitoyl cysteine lipidation sites follow: Cys28 and Cys29. A propeptide spanning residues 59–191 (HMSQKHTEMV…LCGEVPLYYI (133 aa)) is cleaved from the precursor. The BRICHOS domain maps to 94–191 (FSFGSTGLVV…LCGEVPLYYI (98 aa)). Cysteines 121 and 183 form a disulfide.

The protein localises to the secreted. The protein resides in the extracellular space. Its subcellular location is the surface film. Functionally, pulmonary surfactant associated proteins promote alveolar stability by lowering the surface tension at the air-liquid interface in the peripheral air spaces. The polypeptide is Surfactant protein C (SFTPC) (Macaca mulatta (Rhesus macaque)).